Here is a 300-residue protein sequence, read N- to C-terminus: tRNA dimethylallyltransferase (300 aa).

8 to 15 (GASASGKS) lines the ATP pocket. 10 to 15 (SASGKS) lines the substrate pocket. The interaction with substrate tRNA stretch occupies residues 33–36 (DSLS).

This sequence belongs to the IPP transferase family. Monomer. Mg(2+) serves as cofactor.

The enzyme catalyses adenosine(37) in tRNA + dimethylallyl diphosphate = N(6)-dimethylallyladenosine(37) in tRNA + diphosphate. In terms of biological role, catalyzes the transfer of a dimethylallyl group onto the adenine at position 37 in tRNAs that read codons beginning with uridine, leading to the formation of N6-(dimethylallyl)adenosine (i(6)A). The protein is tRNA dimethylallyltransferase of Wolinella succinogenes (strain ATCC 29543 / DSM 1740 / CCUG 13145 / JCM 31913 / LMG 7466 / NCTC 11488 / FDC 602W) (Vibrio succinogenes).